The sequence spans 127 residues: Large-conductance mechanosensitive channel (127 aa).

The next 2 membrane-spanning stretches (helical) occupy residues 14–34 and 69–89; these read VLDL…VKSL and GAFL…FLIV.

This sequence belongs to the MscL family. Homopentamer.

Its subcellular location is the cell membrane. In terms of biological role, channel that opens in response to stretch forces in the membrane lipid bilayer. May participate in the regulation of osmotic pressure changes within the cell. The polypeptide is Large-conductance mechanosensitive channel (Leuconostoc mesenteroides subsp. mesenteroides (strain ATCC 8293 / DSM 20343 / BCRC 11652 / CCM 1803 / JCM 6124 / NCDO 523 / NBRC 100496 / NCIMB 8023 / NCTC 12954 / NRRL B-1118 / 37Y)).